The sequence spans 440 residues: Diels-Alderase mycB (440 aa).

An N-terminal signal peptide occupies residues 1–18 (MGYLVKLACGLLLPLATA). N-linked (GlcNAc...) asparagine glycans are attached at residues Asn-80, Asn-155, and Asn-332.

It belongs to the Diels-Alderase family.

It carries out the reaction (5S)-5-(2-methylpropyl)-3-[(2E,6R,8E,10E,12E)-6,8,10,12-tetramethyltetradeca-2,8,10,12-tetraenoyl]-2,5-dihydro-1H-pyrrol-2-one = (5S)-3-[(1S,2R,4aR,6R,8aS)-2-(but-2-en-2-yl)-3,4a,6-trimethyl-1,2,4a,5,6,7,8,8a-octahydronaphthalene-1-carbonyl]-5-(2-methylpropyl)-2,5-dihydro-1H-pyrrol-2-one. It catalyses the reaction (5Z)-5-(2-methylpropylidene)-3-[(2E,6R,8E,10E,12E)-6,8,10,12-tetramethyltetradeca-2,8,10,12-tetraenoyl]-2,5-dihydro-1H-pyrrol-2-one = myceliothermophin E. It participates in mycotoxin biosynthesis. Diels-Alderase; part of the gene cluster that mediates the biosynthesis of myceliothermophins, mycotoxins that contain a trans-fused decalin ring system connected to a conjugated 3-pyrrolin-2-one moiety and that have potential anti-tumor properties. The polyketide synthase module (PKS) of the PKS-NRPS mycA is responsible for the synthesis of the octaketide backbone. The downstream nonribosomal peptide synthetase (NRPS) module then amidates the carboxyl end of the octaketide with a leucine. A reductase-like domain (R) at the C-terminus catalyzes the reductive release of the polyketide-amino acid intermediate. Because mycA lacks a designated enoylreductase (ER) domain, the required activity is provided the enoyl reductase mycC. Following mycA-catalyzed construction and release of aminoacyl polyketide aldehyde, Knoevenagel condensation yields the expected ketone. This C18 keto acyclic precursor is the substrate of the Diels-Alderase mycB, that catalyzes the Diels-Alder cycloaddition to produce myceliothermophin E. A yet unknown oxygenase involved in the production of myceliothermophin A, via substitution with a hydroxyl group at the C21, has still to be identified. The sequence is that of Diels-Alderase mycB from Thermothelomyces thermophilus (strain ATCC 42464 / BCRC 31852 / DSM 1799) (Sporotrichum thermophile).